The following is a 312-amino-acid chain: MPSAIEAIYIILIAGELTIGIWGNGFIVLVNCIDWLKRRDISLIDIILISLAISRICLLCVISLDGFFMLLFPGTYGNSVLVSIVNVVWTFANNSSLWFTSCLSIFYLLKIANISHPFFFWLKLKINKVMLAILLGSFLISLIISVPKNDDMWYHLFKVSHEENITWKFKVSKIPGTFKQLTLNLGVMVPFILCLISFFLLLFSLVRHTKQIRLHATGFRDPSTEAHMRAIKAVIIFLLLLIVYYPVFLVMTSSALIPQGKLVLMIGDIVTVIFPSSHSFILIMGNSKLREAFLKMLRFVKCFLRRRKPFVP.

At 1-9 (MPSAIEAIY) the chain is on the extracellular side. The helical transmembrane segment at 10 to 32 (IILIAGELTIGIWGNGFIVLVNC) threads the bilayer. Topologically, residues 33–52 (IDWLKRRDISLIDIILISLA) are cytoplasmic. A helical transmembrane segment spans residues 53-72 (ISRICLLCVISLDGFFMLLF). The Extracellular portion of the chain corresponds to 73 to 86 (PGTYGNSVLVSIVN). A helical transmembrane segment spans residues 87-109 (VVWTFANNSSLWFTSCLSIFYLL). The Cytoplasmic portion of the chain corresponds to 110–128 (KIANISHPFFFWLKLKINK). Residues 129-146 (VMLAILLGSFLISLIISV) form a helical membrane-spanning segment. Over 147-180 (PKNDDMWYHLFKVSHEENITWKFKVSKIPGTFKQ) the chain is Extracellular. Asparagine 164 carries an N-linked (GlcNAc...) asparagine glycan. A helical transmembrane segment spans residues 181 to 203 (LTLNLGVMVPFILCLISFFLLLF). Residues 204–234 (SLVRHTKQIRLHATGFRDPSTEAHMRAIKAV) are Cytoplasmic-facing. Residues 235–257 (IIFLLLLIVYYPVFLVMTSSALI) form a helical membrane-spanning segment. Topologically, residues 258-261 (PQGK) are extracellular. The helical transmembrane segment at 262–284 (LVLMIGDIVTVIFPSSHSFILIM) threads the bilayer. At 285–312 (GNSKLREAFLKMLRFVKCFLRRRKPFVP) the chain is on the cytoplasmic side.

Belongs to the G-protein coupled receptor T2R family. In terms of tissue distribution, expressed in subsets of taste receptor cells of the tongue and palate epithelium and exclusively in gustducin-positive cells.

The protein localises to the membrane. Gustducin-coupled receptor implicated in the perception of bitter compounds in the oral cavity and the gastrointestinal tract. Signals through PLCB2 and the calcium-regulated cation channel TRPM5. In Homo sapiens (Human), this protein is Taste receptor type 2 member 9 (TAS2R9).